Consider the following 151-residue polypeptide: Deoxyuridine 5'-triphosphate nucleotidohydrolase (151 aa).

Substrate is bound by residues 70 to 72 (RSG), N83, 87 to 89 (LID), and M97.

This sequence belongs to the dUTPase family. Mg(2+) serves as cofactor.

The catalysed reaction is dUTP + H2O = dUMP + diphosphate + H(+). The protein operates within pyrimidine metabolism; dUMP biosynthesis; dUMP from dCTP (dUTP route): step 2/2. In terms of biological role, this enzyme is involved in nucleotide metabolism: it produces dUMP, the immediate precursor of thymidine nucleotides and it decreases the intracellular concentration of dUTP so that uracil cannot be incorporated into DNA. The chain is Deoxyuridine 5'-triphosphate nucleotidohydrolase from Pseudomonas fluorescens (strain SBW25).